A 241-amino-acid chain; its full sequence is MIKLVNICYDYPDTCGLKDLSLTVNSGDFICLMGPNGSGKSTLLRLLSGLASPTSGAYQFHDQPITTTYLADAQNRQQLHQRIGMVFQNTDVQLFNTSVTEEVAFGPRQLGLSAAMVAQRVADCLQLTDCANLADRVPYQLSGGEKKRVALASVLALNPEILLLDEPLNGLTIAAQQQMLTLLQRLQAAGKTIIMASHNYQQVQAVGERFIIFNSTHQVDADLTRADLDQQPARQAQLMTL.

One can recognise an ABC transporter domain in the interval 2-240; the sequence is IKLVNICYDY…QPARQAQLMT (239 aa). An ATP-binding site is contributed by 34 to 41; it reads GPNGSGKS.

Belongs to the ABC transporter superfamily. In terms of assembly, may form an energy-coupling factor (ECF) transporter complex composed of an ATP-binding protein (A component, LarO), a transmembrane protein (T component, LarQ) and a fused possible substrate-capture protein (S component, LarMN) of unknown stoichiometry.

It is found in the cell membrane. Its function is as follows. Probable ATP-binding component of the energy-coupling factor (ECF) transporter complex LarMNQO involved in nickel import. LarO is presumably responsible for energy coupling to the transport system. In Lactiplantibacillus plantarum (strain ATCC BAA-793 / NCIMB 8826 / WCFS1) (Lactobacillus plantarum), this protein is Nickel import ATP-binding protein LarO.